The primary structure comprises 144 residues: Interleukin-3 (144 aa).

Positions 1 to 17 (MSSLSILHLLLLLLALH) are cleaved as a signal peptide.

It belongs to the IL-3 family. In terms of assembly, monomer.

The protein localises to the secreted. Its function is as follows. Granulocyte/macrophage colony-stimulating factors are cytokines that act in hematopoiesis by controlling the production, differentiation, and function of 2 related white cell populations of the blood, the granulocytes and the monocytes-macrophages. In terms of biological role, this CSF induces granulocytes, macrophages, mast cells, stem cells, erythroid cells, eosinophils and megakaryocytes. The protein is Interleukin-3 (IL3) of Bos taurus (Bovine).